Here is a 224-residue protein sequence, read N- to C-terminus: Response regulator protein GraR (224 aa).

Residues 2–115 form the Response regulatory domain; that stretch reads QVLLVEDDQT…VLIAKLQAIY (114 aa). Position 51 is a 4-aspartylphosphate (Asp-51). Positions 126–224 form a DNA-binding region, ompR/PhoB-type; sequence KRTLNWQDAL…KVGKGYMAHE (99 aa).

In terms of processing, phosphorylated by GraS.

It is found in the cytoplasm. Its function is as follows. Member of the two-component regulatory system GraR/GraS involved in resistance against cationic antimicrobial peptides (CAMPs). This chain is Response regulator protein GraR (graR), found in Staphylococcus haemolyticus (strain JCSC1435).